The following is a 203-amino-acid chain: Corrinoid adenosyltransferase (203 aa).

Residues 1-21 (MNESPEKDQRHRERMERKKAV) form a disordered region. An ATP-binding site is contributed by 41–47 (GNGKGKS).

It belongs to the Cob(I)alamin adenosyltransferase family. Monomer. It depends on Mn(2+) as a cofactor.

The protein resides in the cytoplasm. The catalysed reaction is 2 cob(II)yrinate a,c diamide + reduced [electron-transfer flavoprotein] + 2 ATP = 2 adenosylcob(III)yrinate a,c-diamide + 2 triphosphate + oxidized [electron-transfer flavoprotein] + 3 H(+). The enzyme catalyses 2 cob(II)alamin + reduced [electron-transfer flavoprotein] + 2 ATP = 2 adenosylcob(III)alamin + 2 triphosphate + oxidized [electron-transfer flavoprotein] + 3 H(+). It functions in the pathway cofactor biosynthesis; adenosylcobalamin biosynthesis; adenosylcobalamin from cob(II)yrinate a,c-diamide: step 2/7. Its function is as follows. Required for both de novo synthesis of the corrin ring for the assimilation of exogenous corrinoids. Participates in the adenosylation of a variety of incomplete and complete corrinoids. The protein is Corrinoid adenosyltransferase (cobO) of Pseudomonas aeruginosa (strain ATCC 15692 / DSM 22644 / CIP 104116 / JCM 14847 / LMG 12228 / 1C / PRS 101 / PAO1).